A 233-amino-acid polypeptide reads, in one-letter code: Phosphoribosylaminoimidazole-succinocarboxamide synthase (233 aa).

This sequence belongs to the SAICAR synthetase family.

The enzyme catalyses 5-amino-1-(5-phospho-D-ribosyl)imidazole-4-carboxylate + L-aspartate + ATP = (2S)-2-[5-amino-1-(5-phospho-beta-D-ribosyl)imidazole-4-carboxamido]succinate + ADP + phosphate + 2 H(+). It functions in the pathway purine metabolism; IMP biosynthesis via de novo pathway; 5-amino-1-(5-phospho-D-ribosyl)imidazole-4-carboxamide from 5-amino-1-(5-phospho-D-ribosyl)imidazole-4-carboxylate: step 1/2. The sequence is that of Phosphoribosylaminoimidazole-succinocarboxamide synthase from Thermococcus sibiricus (strain DSM 12597 / MM 739).